The following is a 28-amino-acid chain: fur leader peptide (28 aa).

Cotranscribed with fur, it is essential for fur translation. The fur ribosomal binding site (RBS) is occluded by the 5'-mRNA secondary structure, which is opened by uof translation. The chain is fur leader peptide (uof) from Escherichia coli (strain K12).